The following is a 253-amino-acid chain: DNA polymerase sliding clamp 2 (253 aa).

This sequence belongs to the PCNA family. As to quaternary structure, homotrimer. The subunits circularize to form a toroid; DNA passes through its center. Replication factor C (RFC) is required to load the toroid on the DNA. Interacts with TIP.

Inhibited by interaction with the PCNA inhibitor TIP. Its function is as follows. Sliding clamp subunit that acts as a moving platform for DNA processing. Responsible for tethering the catalytic subunit of DNA polymerase and other proteins to DNA during high-speed replication. The protein is DNA polymerase sliding clamp 2 of Thermococcus kodakarensis (strain ATCC BAA-918 / JCM 12380 / KOD1) (Pyrococcus kodakaraensis (strain KOD1)).